A 123-amino-acid polypeptide reads, in one-letter code: uncharacterized protein (123 aa).

Residues 34 to 53 (LPFFFLFLGNLGKFFFLWPL) form a helical membrane-spanning segment.

The protein resides in the membrane. This is an uncharacterized protein from Saccharomyces cerevisiae (strain ATCC 204508 / S288c) (Baker's yeast).